We begin with the raw amino-acid sequence, 951 residues long: Zinc fingers and homeoboxes protein 3 (951 aa).

Positions 1–66 (MASKRKSTTP…SSTDGSALAN (66 aa)) are disordered. Residues 42–58 (PSEAPEASSEAAPNPSS) are compositionally biased toward low complexity. 2 C2H2-type zinc fingers span residues 77 to 100 (YSCK…TSEH) and 109 to 132 (FVCT…AKCH). Residues 198–249 (KENAPTQPGGEALPKPLAGETEGKEGDHTFINGATPVSQASANSTKPPHTAN) are disordered. The segment covering 232-244 (TPVSQASANSTKP) has biased composition (polar residues). The segment at 237 to 481 (ASANSTKPPH…LLTACPSITS (245 aa)) is required for homodimerization and interaction with NFYA. A required for repressor activity region spans residues 297 to 495 (LSSIPTYNAA…DANIYKNKKS (199 aa)). DNA-binding regions (homeobox) lie at residues 298-357 (SSIP…GISW) and 487-546 (ANIY…RNLK). The tract at residues 490-548 (YKNKKSHEQLSALKGSFCRNQFPGQSEVEHLTKVTGLSTREVRKWFSDRRYHCRNLKGT) is required for nuclear localization. The residue at position 597 (serine 597) is a Phosphoserine. The segment at residues 605–664 (TPTKYKERAPEQLRVLESSFAQNPLPPEEELDRLRSETKMTRREIDGWFSERRKRVNAEE) is a DNA-binding region (homeobox 3). Disordered stretches follow at residues 621–642 (ESSF…RSET) and 661–702 (NAEE…NGSS). The span at 661-674 (NAEETKKADGHAPQ) shows a compositional bias: basic and acidic residues. Over residues 675–690 (EEAEGAEEEGRDEELA) the composition is skewed to acidic residues. A phosphoserine mark is found at serine 701 and serine 716. 2 DNA-binding regions (homeobox) span residues 759–818 (PSRV…KNGQ) and 830–889 (FPPG…TRAV). The interval 885 to 951 (ETRAVADTSS…PQSGRQLETD (67 aa)) is disordered. Phosphoserine is present on residues serine 922 and serine 941. The segment covering 937 to 951 (FDTSSPQSGRQLETD) has biased composition (polar residues).

This sequence belongs to the ZHX family. Homodimer (via homeobox domain 1). Heterodimer with ZHX1 (via homeobox domain 1). Heterodimer with ZHX2 (via homeobox domain 1). Heterodimerization with ZHX1 is a prerequisite for repressor activity. Interacts with NFYA. In terms of tissue distribution, widely expressed.

It is found in the cytoplasm. It localises to the nucleus. Acts as a transcriptional repressor. Involved in the early stages of mesenchymal stem cell (MSC) osteogenic differentiation. Is a regulator of podocyte gene expression during primary glomerula disease. Binds to promoter DNA. The sequence is that of Zinc fingers and homeoboxes protein 3 (Zhx3) from Rattus norvegicus (Rat).